The sequence spans 445 residues: Serine--tRNA ligase (445 aa).

229–231 is an L-serine binding site; it reads TAE. ATP contacts are provided by residues 260-262 and valine 276; that span reads RKE. L-serine is bound at residue glutamate 283. 347–350 lines the ATP pocket; sequence EVSS. L-serine is bound at residue serine 383.

Belongs to the class-II aminoacyl-tRNA synthetase family. Type-1 seryl-tRNA synthetase subfamily. Homodimer. The tRNA molecule binds across the dimer.

Its subcellular location is the cytoplasm. It catalyses the reaction tRNA(Ser) + L-serine + ATP = L-seryl-tRNA(Ser) + AMP + diphosphate + H(+). It carries out the reaction tRNA(Sec) + L-serine + ATP = L-seryl-tRNA(Sec) + AMP + diphosphate + H(+). The protein operates within aminoacyl-tRNA biosynthesis; selenocysteinyl-tRNA(Sec) biosynthesis; L-seryl-tRNA(Sec) from L-serine and tRNA(Sec): step 1/1. Functionally, catalyzes the attachment of serine to tRNA(Ser). Is also able to aminoacylate tRNA(Sec) with serine, to form the misacylated tRNA L-seryl-tRNA(Sec), which will be further converted into selenocysteinyl-tRNA(Sec). The protein is Serine--tRNA ligase of Thermomicrobium roseum (strain ATCC 27502 / DSM 5159 / P-2).